The primary structure comprises 135 residues: MRKHRIVSLVAALLVLLALAAVSSTRSTQKESVADNAGMLAGGIKDVPANENDLQLQELARFAVNEHNQKANALLGFEKLVKAKTQVVAGTMYYLTIEVKDGEVKKLYEAKVWEKPWENFKQLQEFKPVEEGASA.

The N-terminal stretch at 1–24 is a signal peptide; that stretch reads MRKHRIVSLVAALLVLLALAAVSS. Positions 86–90 match the Secondary area of contact motif; sequence QVVAG.

This sequence belongs to the cystatin family. Phytocystatin subfamily.

The protein is Cystatin-1 (RAMDAZC7) of Zea mays (Maize).